A 276-amino-acid chain; its full sequence is Diaminopimelate epimerase (276 aa).

Substrate is bound by residues Asn-13, Gln-46, and Asn-66. Cys-75 acts as the Proton donor in catalysis. Residues 76 to 77 (GN), Asn-159, Asn-192, and 210 to 211 (ER) each bind substrate. Cys-219 functions as the Proton acceptor in the catalytic mechanism. 220–221 (GT) is a binding site for substrate.

Belongs to the diaminopimelate epimerase family. As to quaternary structure, homodimer.

It is found in the cytoplasm. The enzyme catalyses (2S,6S)-2,6-diaminopimelate = meso-2,6-diaminopimelate. The protein operates within amino-acid biosynthesis; L-lysine biosynthesis via DAP pathway; DL-2,6-diaminopimelate from LL-2,6-diaminopimelate: step 1/1. Functionally, catalyzes the stereoinversion of LL-2,6-diaminopimelate (L,L-DAP) to meso-diaminopimelate (meso-DAP), a precursor of L-lysine and an essential component of the bacterial peptidoglycan. The protein is Diaminopimelate epimerase of Pseudomonas fluorescens.